The primary structure comprises 312 residues: Methionyl-tRNA formyltransferase (312 aa).

110-113 (SLLP) lines the (6S)-5,6,7,8-tetrahydrofolate pocket.

This sequence belongs to the Fmt family.

It catalyses the reaction L-methionyl-tRNA(fMet) + (6R)-10-formyltetrahydrofolate = N-formyl-L-methionyl-tRNA(fMet) + (6S)-5,6,7,8-tetrahydrofolate + H(+). In terms of biological role, attaches a formyl group to the free amino group of methionyl-tRNA(fMet). The formyl group appears to play a dual role in the initiator identity of N-formylmethionyl-tRNA by promoting its recognition by IF2 and preventing the misappropriation of this tRNA by the elongation apparatus. The sequence is that of Methionyl-tRNA formyltransferase from Mycobacterium marinum (strain ATCC BAA-535 / M).